Reading from the N-terminus, the 333-residue chain is Serine proteinase inhibitor 2 (333 aa).

This sequence belongs to the serpin family. Poxviruses subfamily.

It localises to the host cytoplasm. Weak inhibitor of the interleukin-1-beta converting enzyme (ICE) and of granzyme B. Does not form a stable complex with ICE, but can for a stable complex with granzyme B. The chain is Serine proteinase inhibitor 2 (SERP2) from Myxoma virus (strain Uriarra) (MYXV).